We begin with the raw amino-acid sequence, 205 residues long: uncharacterized protein (205 aa).

Helical transmembrane passes span 18 to 38, 69 to 89, 106 to 126, and 127 to 147; these read ATVN…GTIG, LGIF…CFYA, VVWI…YYIM, and LLHP…LFLI.

It localises to the mitochondrion membrane. This is an uncharacterized protein from Arabidopsis thaliana (Mouse-ear cress).